The chain runs to 465 residues: MGSGKAFLFSPSLLWSQTRGVRLIFLLLTLHLGNCVDKADDEDDEDLTMNKTWVLAPKIHEGDITQILNSLLQGYDNKLRPDIGVRPTVIETDVYVNSIGPVDPINMEYTIDIIFAQTWFDSRLKFNSTMKVLMLNSNMVGKIWIPDTFFRNSRKSDAHWITTPNRLLRIWSDGRVLYTLRLTINAECYLQLHNFPMDEHSCPLEFSSYGYPKNEIEYKWKKPSVEVADPKYWRLYQFAFVGLRNSTEISHTISGDYIIMTIFFDLSRRMGYFTIQTYIPCILTVVLSWVSFWINKDAVPARTSLGITTVLTMTTLSTIARKSLPKVSYVTAMDLFVSVCFIFVFAALMEYGTLHYFTSNNKGKTTRGRKLKNKTSASPGLHAGSTLIPMNSISLPQGEDDYGYQCLEGKDCTSFFCCFDDCRTGSWREGRIHIRIAKIDSYSRIFFPTAFALFNLVYWVGYLYL.

Positions 1–20 are cleaved as a signal peptide; that stretch reads MGSGKAFLFSPSLLWSQTRG. Residues 21-273 lie on the Extracellular side of the membrane; sequence VRLIFLLLTL…FDLSRRMGYF (253 aa). 2 N-linked (GlcNAc...) asparagine glycosylation sites follow: asparagine 50 and asparagine 127. Cysteine 188 and cysteine 202 form a disulfide bridge. Asparagine 245 is a glycosylation site (N-linked (GlcNAc...) asparagine). A helical membrane pass occupies residues 274–294; the sequence is TIQTYIPCILTVVLSWVSFWI. Over 295–300 the chain is Cytoplasmic; the sequence is NKDAVP. The chain crosses the membrane as a helical span at residues 301 to 320; the sequence is ARTSLGITTVLTMTTLSTIA. At 321–328 the chain is on the extracellular side; it reads RKSLPKVS. A helical transmembrane segment spans residues 329–349; that stretch reads YVTAMDLFVSVCFIFVFAALM. Residues 350-444 lie on the Cytoplasmic side of the membrane; that stretch reads EYGTLHYFTS…RIAKIDSYSR (95 aa). A helical membrane pass occupies residues 445 to 465; that stretch reads IFFPTAFALFNLVYWVGYLYL.

It belongs to the ligand-gated ion channel (TC 1.A.9) family. Gamma-aminobutyric acid receptor (TC 1.A.9.5) subfamily. GABRG1 sub-subfamily. Heteropentamer, formed by a combination of alpha (GABRA1-6), beta (GABRB1-3), gamma (GABRG1-3), delta (GABRD), epsilon (GABRE), rho (GABRR1-3), pi (GABRP) and theta (GABRQ) chains, each subunit exhibiting distinct physiological and pharmacological properties. In terms of processing, may be palmitoylated. In terms of tissue distribution, expressed in brain.

Its subcellular location is the postsynaptic cell membrane. The protein resides in the cell membrane. The catalysed reaction is chloride(in) = chloride(out). Gamma subunit of the heteropentameric ligand-gated chloride channel gated by gamma-aminobutyric acid (GABA), a major inhibitory neurotransmitter in the brain. GABA-gated chloride channels, also named GABA(A) receptors (GABAAR), consist of five subunits arranged around a central pore and contain GABA active binding site(s) located at the alpha and beta subunit interface(s). When activated by GABA, GABAARs selectively allow the flow of chloride anions across the cell membrane down their electrochemical gradient. Chloride influx into the postsynaptic neuron following GABAAR opening decreases the neuron ability to generate a new action potential, thereby reducing nerve transmission. This Mus musculus (Mouse) protein is Gamma-aminobutyric acid receptor subunit gamma-1.